The following is a 160-amino-acid chain: Cytochrome b6-f complex subunit 4 (160 aa).

The next 3 membrane-spanning stretches (helical) occupy residues 36-56 (LLYV…GLAI), 95-115 (LLGI…PFIE), and 131-151 (AIFL…TFPI).

The protein belongs to the cytochrome b family. PetD subfamily. In terms of assembly, the 4 large subunits of the cytochrome b6-f complex are cytochrome b6, subunit IV (17 kDa polypeptide, PetD), cytochrome f and the Rieske protein, while the 4 small subunits are PetG, PetL, PetM and PetN. The complex functions as a dimer.

Its subcellular location is the cellular thylakoid membrane. Component of the cytochrome b6-f complex, which mediates electron transfer between photosystem II (PSII) and photosystem I (PSI), cyclic electron flow around PSI, and state transitions. The polypeptide is Cytochrome b6-f complex subunit 4 (Microcystis aeruginosa (strain NIES-843 / IAM M-2473)).